Consider the following 250-residue polypeptide: Doublesex- and mab-3-related transcription factor dmd-3 (250 aa).

The DM 1 DNA-binding region spans 19 to 68 (CQRCLNHGLREKRKNHKLSCTFRFCQCSNCIMVERRRQLNSRLMQIDGSR). Over residues 90 to 100 (CTSQSETTNES) the composition is skewed to polar residues. The segment at 90–115 (CTSQSETTNESSGEDKDDGKPKERRP) is disordered. A compositionally biased stretch (basic and acidic residues) spans 102–115 (GEDKDDGKPKERRP). Positions 117-164 (CQRCAQHSVVNRLKGHKRACPFRDCFCAKCQVVVERQKLMADQIKLRR) form a DNA-binding region, DM 2. The interval 166 to 201 (QKREKNNLNSEREAPIAHSMTPSPIDTVTTTTTPTS) is disordered. Basic and acidic residues predominate over residues 169 to 180 (EKNNLNSEREAP). Low complexity predominate over residues 186–201 (TPSPIDTVTTTTTPTS).

This sequence belongs to the DMRT family. In terms of tissue distribution, in males, expressed in the tail tip. Specifically, expressed in 15 male-specific muscles of the tail tip called the diagonal muscles, and also in core body muscles of both males and hermaphrodites. In males, expressed in ray A-neurons. In males, expressed in PHC sensory neurons. In males, it is also expressed in the hindgut, B lineage and somatic gonad. In hermaphrodites, expressed in the anchor cell only.

The protein resides in the nucleus. The protein localises to the perikaryon. Transcriptional activator which promotes male-specific development. Acts partially redundantly with the transcription factor mab-3 to coordinate tail tip cell fusion and retraction and thereby regulate male tail tip morphogenesis. This is most likely through the regulation of downstream effectors such as eff-1. May also negatively regulate the expression of other proteins implicated in male tail morphogenesis including nhr-25, vav-1 and arl-1 in tail tip cells. In males, plays a role in the development of ray A-neurons by negatively regulating the activity of the transcription factor ast-1. Plays a role in the male-specific differentiation of PHC sensory neurons into densely connected hub sensory neurons. Plays a role in male mating behavior. In Caenorhabditis elegans, this protein is Doublesex- and mab-3-related transcription factor dmd-3.